A 161-amino-acid polypeptide reads, in one-letter code: Nucleotide-binding protein PputGB1_4497 (161 aa).

The protein belongs to the YajQ family.

Functionally, nucleotide-binding protein. The sequence is that of Nucleotide-binding protein PputGB1_4497 from Pseudomonas putida (strain GB-1).